We begin with the raw amino-acid sequence, 244 residues long: U4/U6.U5 tri-snRNP-associated protein 3-like protein C162.01c (244 aa).

2 stretches are compositionally biased toward basic and acidic residues: residues 1-11 and 20-116; these read MSSSRSGEHRR and ESSR…RRDG. 2 disordered regions span residues 1-192 and 223-244; these read MSSS…EDEA and KKTKYRQYMNRPGGFNRPLDNE. 2 positions are modified to phosphoserine: Ser121 and Ser140. Residues 126-182 are compositionally biased toward basic and acidic residues; the sequence is GLERKREHEKLQAPSPKEEEERPVDQGDKMDGVKEDKDGSLEVGKSHDAMTRTKSAE. Over residues 183 to 192 the composition is skewed to acidic residues; the sequence is EEIVEQEDEA.

It belongs to the SNUT3 family. Part of a tri-snRNP complex.

Its subcellular location is the nucleus. In terms of biological role, may play a role in mRNA splicing. This chain is U4/U6.U5 tri-snRNP-associated protein 3-like protein C162.01c, found in Schizosaccharomyces pombe (strain 972 / ATCC 24843) (Fission yeast).